The sequence spans 752 residues: Lid2 complex component jmj3 (752 aa).

Residues 34–75 (IPVVEPKISEFVDMESFIRRVERLGKKYGAIKVVRPSSVLNP) form the JmjN domain. Residues 162-333 (YTNRPSIPFY…NYEFSNLRRL (172 aa)) enclose the JmjC domain. Composition is skewed to polar residues over residues 391-402 (SFSQRDFDSPNS) and 409-423 (LMSNHESASTEHFNS). The disordered stretch occupies residues 391–438 (SFSQRDFDSPNSINPPSPLMSNHESASTEHFNSTTTTEKELSSLHVGE). The span at 427 to 438 (TEKELSSLHVGE) shows a compositional bias: basic and acidic residues.

Component of the Lid2 complex composed of ash2, jmj3, lid2, sdc1 and snt2.

It localises to the nucleus. This is Lid2 complex component jmj3 from Schizosaccharomyces pombe (strain 972 / ATCC 24843) (Fission yeast).